Consider the following 386-residue polypeptide: Ovalbumin (386 aa).

Residue Gly-2 is modified to N-acetylglycine. The not cleaved signal peptide spans 22–48 (HHANENIFYCPIAIMSALAMVYLGAKD). Position 69 is a phosphoserine (Ser-69). An intrachain disulfide couples Cys-74 to Cys-121. Glu-192 serves as a coordination point for Ca(2+). Residue Asn-293 is glycosylated (N-linked (GlcNAc...) asparagine). Position 345 is a phosphoserine (Ser-345).

This sequence belongs to the serpin family. Ov-serpin subfamily. In terms of assembly, homodimer. In terms of processing, undergoes proteolytic cleavage first at the canonical P1-P1' site, and then at the P8-P7 site by subtilisin. As to expression, major protein of egg white. Expressed in the magnum of the oviduct (at protein level).

Its subcellular location is the secreted. Functionally, non-inhibitory serpin. Storage protein of egg white. The protein is Ovalbumin (SERPINB14) of Gallus gallus (Chicken).